The following is a 633-amino-acid chain: Probable potassium transport system protein Kup 3 (633 aa).

A run of 11 helical transmembrane segments spans residues 61-81, 107-127, 143-163, 173-193, 211-231, 255-275, 287-307, 345-365, 371-391, 402-422, and 427-447; these read LVSL…VLFL, PVLM…DAMI, VAPA…LLLF, VSVF…AAGV, AIGF…AIFL, WFAV…ALVL, LMFP…GTII, IYLP…MLMF, LAPA…ILAF, ALTA…FLGA, and IHHG…MMWT.

It belongs to the HAK/KUP transporter (TC 2.A.72) family.

The protein localises to the cell inner membrane. The catalysed reaction is K(+)(in) + H(+)(in) = K(+)(out) + H(+)(out). In terms of biological role, transport of potassium into the cell. Likely operates as a K(+):H(+) symporter. The protein is Probable potassium transport system protein Kup 3 of Sinorhizobium medicae (strain WSM419) (Ensifer medicae).